An 857-amino-acid chain; its full sequence is Autoinducer 2 sensor kinase/phosphatase LuxQ (857 aa).

Transmembrane regions (helical) follow at residues 20-40 (IIFL…YYFS) and 283-303 (LGLA…RSWI). One can recognise a Histidine kinase domain in the interval 490 to 712 (KMSHEIRTPL…TFYLSIPVEK (223 aa)). Position 493 is a phosphohistidine; by autocatalysis (His493). A Response regulatory domain is found at 735–850 (KVLLVEDNHT…ELHDELLHFK (116 aa)). A 4-aspartylphosphate modification is found at Asp784.

As to quaternary structure, binds the complex formed by the autoinducer and LuxP.

It is found in the cell inner membrane. It catalyses the reaction ATP + protein L-histidine = ADP + protein N-phospho-L-histidine.. At low cell density, in absence of autoinducer has a kinase activity, and autophosphorylates on a histidine residue. The phosphoryl group is then transferred to an aspartate residue in the response regulator domain. The phosphoryl group is transferred to LuxU, and ultimately to LuxO. At high cell density, in the presence of autoinducer, the kinase activity is inactivated, and the response regulator domain has a phosphatase activity. This Vibrio vulnificus (strain CMCP6) protein is Autoinducer 2 sensor kinase/phosphatase LuxQ (luxQ).